Here is a 112-residue protein sequence, read N- to C-terminus: Hydrogenase maturation factor HypA (112 aa).

H2 contributes to the Ni(2+) binding site. Zn(2+)-binding residues include C72, C75, C88, and C91.

The protein belongs to the HypA/HybF family.

Its function is as follows. Involved in the maturation of [NiFe] hydrogenases. Required for nickel insertion into the metal center of the hydrogenase. The chain is Hydrogenase maturation factor HypA from Francisella philomiragia subsp. philomiragia (strain ATCC 25017 / CCUG 19701 / FSC 153 / O#319-036).